The following is a 765-amino-acid chain: Palmitoyltransferase ZDHHC8 (765 aa).

Residues 1-13 lie on the Cytoplasmic side of the membrane; sequence MPRSPGTRLKPAK. Residues 14–34 form a helical membrane-spanning segment; the sequence is YIPVATAAALLVGSSTLFFVF. Residues 35 to 52 lie on the Lumenal side of the membrane; it reads TCPWLTRAVSPAVPVYNG. The helical transmembrane segment at 53 to 73 threads the bilayer; it reads IIFLFVLANFSMATFMDPGVF. Over 74 to 148 the chain is Cytoplasmic; that stretch reads PRADEDEDKE…NCIGRRNYRY (75 aa). Residues 104–154 enclose the DHHC domain; it reads KWCATCHFYRPPRCSHCSVCDNCVEDFDHHCPWVNNCIGRRNYRYFFLFLL. Cys134 (S-palmitoyl cysteine intermediate) is an active-site residue. Residues 149-169 form a helical membrane-spanning segment; the sequence is FFLFLLSLSAHMVGVVAFGLV. Residues 170–190 are Lumenal-facing; that stretch reads YVLNHAEGLGAAHTTITMAVM. The chain crosses the membrane as a helical span at residues 191–211; that stretch reads CVAGLFFIPVIGLTGFHVVLV. Over 212-765 the chain is Cytoplasmic; that stretch reads TRGRTTNEHV…VGGTTYEISV (554 aa). Positions 290-386 are disordered; sequence LKAGLGRSKS…PGPDSLTLGE (97 aa). A compositionally biased stretch (basic and acidic residues) spans 301 to 311; sequence GSLDRLDEKPL. Residues 333 to 348 are compositionally biased toward polar residues; the sequence is PRPSSAESALSAQRTS. Ser337 carries the post-translational modification Phosphoserine. Omega-N-methylarginine is present on Arg441. Positions 447 to 542 are disordered; the sequence is ALQPLRSEGG…PREPSPVRYD (96 aa). Ser606 and Ser627 each carry phosphoserine. The disordered stretch occupies residues 630–747; it reads SLSSAVSRAP…PGPSASPARH (118 aa). Over residues 639-655 the composition is skewed to polar residues; sequence PRTSSSSLQADLANNNA. Pro residues predominate over residues 671-680; it reads QGPPSPPSTP. Phosphoserine is present on residues Ser675, Ser682, Ser725, and Ser743.

The protein belongs to the DHHC palmitoyltransferase family. ERF2/ZDHHC9 subfamily.

The protein localises to the golgi apparatus membrane. The protein resides in the mitochondrion membrane. The enzyme catalyses L-cysteinyl-[protein] + hexadecanoyl-CoA = S-hexadecanoyl-L-cysteinyl-[protein] + CoA. In terms of biological role, palmitoyltransferase that catalyzes the addition of palmitate onto various protein substrates and therefore functions in several unrelated biological processes. Through the palmitoylation of ABCA1 regulates the localization of the transporter to the plasma membrane and thereby regulates its function in cholesterol and phospholipid efflux. Could also pamitoylate the D(2) dopamine receptor DRD2 and regulate its stability and localization to the plasma membrane. Could also play a role in glutamatergic transmission. This Canis lupus familiaris (Dog) protein is Palmitoyltransferase ZDHHC8.